Here is a 548-residue protein sequence, read N- to C-terminus: DNA ligase (548 aa).

Glu244 lines the ATP pocket. The N6-AMP-lysine intermediate role is filled by Lys246. Residues Arg251, Arg266, Glu295, Phe334, Arg405, and Lys411 each coordinate ATP.

It belongs to the ATP-dependent DNA ligase family. Mg(2+) serves as cofactor.

It catalyses the reaction ATP + (deoxyribonucleotide)n-3'-hydroxyl + 5'-phospho-(deoxyribonucleotide)m = (deoxyribonucleotide)n+m + AMP + diphosphate.. Its function is as follows. DNA ligase that seals nicks in double-stranded DNA during DNA replication, DNA recombination and DNA repair. This Methanoculleus marisnigri (strain ATCC 35101 / DSM 1498 / JR1) protein is DNA ligase.